The sequence spans 177 residues: B-phycoerythrin beta chain (177 aa).

Positions 50 and 61 each coordinate (2R,3E)-phycoerythrobilin. N4-methylasparagine is present on Asn-72. Residues Cys-82 and Cys-158 each coordinate (2R,3E)-phycoerythrobilin.

It belongs to the phycobiliprotein family. Heterotetramer of one alpha-1, one alpha-2, and two beta chains. Post-translationally, contains three covalently linked bilin chromophores.

The protein resides in the plastid. The protein localises to the chloroplast thylakoid membrane. Light-harvesting photosynthetic bile pigment-protein from the phycobiliprotein complex. This is B-phycoerythrin beta chain (cpeB) from Guillardia theta (Cryptophyte).